The chain runs to 104 residues: Putative membrane protein insertion efficiency factor (104 aa).

A disordered region spans residues 83 to 104 (SSPTPLAESPDDRTVPHTQETS).

The protein belongs to the UPF0161 family.

It localises to the cell inner membrane. In terms of biological role, could be involved in insertion of integral membrane proteins into the membrane. This Chlamydia trachomatis serovar D (strain ATCC VR-885 / DSM 19411 / UW-3/Cx) protein is Putative membrane protein insertion efficiency factor.